The chain runs to 1052 residues: RTX-III toxin determinant A from serotype 8 (1052 aa).

Helical transmembrane passes span 248-265 (GLDIISSLLSGVTASFAL), 275-334 (KVAA…LRVA), and 372-418 (DASI…GILE). 6 Hemolysin-type calcium-binding repeats span residues 744–761 (KGSKFRDIFHGADGDDLL), 762–779 (NGNDGDDILYGDKGNDEL), 780–797 (RGDNGNDQLYGGEGNDKL), 798–815 (LGGNGNNYLSGGDGNDEL), 826–843 (RGGKGDDKLYGSSGSDLL), and 844–861 (DGGEGNDYLEGGDGSDFY).

Belongs to the RTX prokaryotic toxin (TC 1.C.11) family. Post-translationally, palmitoylated by ApxIIIC. The toxin only becomes active when modified.

The protein resides in the secreted. Its subcellular location is the host cell membrane. Its function is as follows. Does not have hemolytic activity but shows a strong cytotoxicity towards alveolar macrophages and neutrophils. The chain is RTX-III toxin determinant A from serotype 8 (apxIIIA) from Actinobacillus pleuropneumoniae (Haemophilus pleuropneumoniae).